The sequence spans 250 residues: ADPR responsive transcriptional repressor NtrR (250 aa).

In terms of domain architecture, Nudix hydrolase spans 26 to 157 (LMTVDMAIFS…DHHDLLQQAF (132 aa)). Residues 62–85 (GFVDLEQDQNLMACAHRKLLEKTG) carry the Nudix box motif. Residues 164-237 (TRYTALPISL…RFALQDYDFN (74 aa)) are winged helix-like DNA-binding region.

Its activity is regulated as follows. DNA binding is efficiently suppressed in the presence of ADP-ribose (ADPR) or phospho-ADPR. Accumulation of ADPR resulting from NAD degradation may be interpreted by the cell as a signal to activate recycling of nicotinamide. In terms of biological role, involved in the transcriptional regulation of the nondeamidating salvage pathway for production of NAD from nicotinamide. Represses expression of the prs-nadV-nrtR operon by binding to the DNA region located upstream of the operon, thus blocking the nondeamidating pathway. In Acinetobacter baylyi (strain ATCC 33305 / BD413 / ADP1), this protein is ADPR responsive transcriptional repressor NtrR.